Here is a 423-residue protein sequence, read N- to C-terminus: MTKAMEELLTSNLFVQQVKKLYKVGELLGLDLDTLEALSQPERVIQVKIQIRGSDGKLKTFMGWRSQHNSALGPYKGGVRYSPNVTQDEVIALSMIMTWKNSLLLLPYGGGKGGIRVDPKKLTLKELEDLSRKYVQLIHNYLGSDVDIPAPDINTNPQTMAWFLDEYIKITGEVDFAVFTGKPSELGGIGVRLYSTGLGVATIAREAANKFIGGIEGSRVIIQGFGNVGSFTAKFLNEMGAKIIGVSDIGGGVISDDGIDVNKALEVVQSTGSVVNYPEGKKVTNEELLTSDCDILIPAAVENVINKFNAPKVKAKLIVEGANGPLTADADEIIKQRGIVVIPDILANAGGVVGSYVEWANNKSGGIISDEEAKKLIIDRMTNAFNALYEFHKRKFADQDLRTVAMALAVDRVVRAMKARGLL.

Residue Lys112 is part of the active site.

It belongs to the Glu/Leu/Phe/Val dehydrogenases family. As to quaternary structure, homohexamer.

It catalyses the reaction L-glutamate + NADP(+) + H2O = 2-oxoglutarate + NH4(+) + NADPH + H(+). The chain is NADP-specific glutamate dehydrogenase (gdhA) from Saccharolobus shibatae (strain ATCC 51178 / DSM 5389 / JCM 8931 / NBRC 15437 / B12) (Sulfolobus shibatae).